The chain runs to 261 residues: tRNA U34 carboxymethyltransferase (261 aa).

Carboxy-S-adenosyl-L-methionine is bound by residues Lys-25, Trp-39, Lys-44, Gly-63, 114 to 115 (VE), Tyr-135, and Arg-250.

It belongs to the class I-like SAM-binding methyltransferase superfamily. CmoB family. Homotetramer.

It carries out the reaction carboxy-S-adenosyl-L-methionine + 5-hydroxyuridine(34) in tRNA = 5-carboxymethoxyuridine(34) in tRNA + S-adenosyl-L-homocysteine + H(+). In terms of biological role, catalyzes carboxymethyl transfer from carboxy-S-adenosyl-L-methionine (Cx-SAM) to 5-hydroxyuridine (ho5U) to form 5-carboxymethoxyuridine (cmo5U) at position 34 in tRNAs. This Helicobacter pylori (strain G27) protein is tRNA U34 carboxymethyltransferase.